A 642-amino-acid chain; its full sequence is Extracellular metalloproteinase 4 (642 aa).

The first 18 residues, 1-18 (MHGLLLAGLLALPLNVLA), serve as a signal peptide directing secretion. The propeptide occupies 19 to 253 (HPTESHSSGI…VHSVVDYVSA (235 aa)). A compositionally biased stretch (polar residues) spans 49–60 (SDSLTGQDGQSF). A disordered region spans residues 49 to 72 (SDSLTGQDGQSFTASSADADTSSG). Low complexity predominate over residues 61–71 (TASSADADTSS). A glycan (N-linked (GlcNAc...) asparagine) is linked at asparagine 419. Residue histidine 436 coordinates Zn(2+). Residue glutamate 437 is part of the active site. Residue histidine 440 coordinates Zn(2+). Asparagine 509 and asparagine 602 each carry an N-linked (GlcNAc...) asparagine glycan.

Belongs to the peptidase M36 family. Zn(2+) serves as cofactor.

The protein resides in the secreted. In terms of biological role, secreted metalloproteinase that allows assimilation of proteinaceous substrates and probably acts as a virulence factor. This chain is Extracellular metalloproteinase 4 (MEP4), found in Arthroderma gypseum (strain ATCC MYA-4604 / CBS 118893) (Microsporum gypseum).